A 162-amino-acid chain; its full sequence is Disulfide bond formation protein B (162 aa).

Residues 1–4 (MRII) are Cytoplasmic-facing. A helical membrane pass occupies residues 5–21 (FLLIFLACAGLIGYALY). Residues 22–39 (LQLMDGLLPCPLCIFQRI) lie on the Periplasmic side of the membrane. Cys31 and Cys34 are disulfide-bonded. A helical membrane pass occupies residues 40–56 (AYWLIGITALFTFIHNP). Over 57-62 (QSLGQH) the chain is Cytoplasmic. The chain crosses the membrane as a helical span at residues 63–80 (IYYGLIILFSLAGAIVAG). The Periplasmic portion of the chain corresponds to 81-136 (RQAWLIRFPEAFECGISPEEAFLNGLPLAQWWPNMFEANGDCNDGTWQFLSLTLPD). Cysteines 94 and 122 form a disulfide. Residues 137–155 (WSLLIFAAFGIIAGLLWHK) traverse the membrane as a helical segment. Over 156-162 (KYNSINQ) the chain is Cytoplasmic.

This sequence belongs to the DsbB family.

The protein localises to the cell inner membrane. In terms of biological role, required for disulfide bond formation in some periplasmic proteins. Acts by oxidizing the DsbA protein. This chain is Disulfide bond formation protein B, found in Nitrosomonas eutropha (strain DSM 101675 / C91 / Nm57).